Reading from the N-terminus, the 468-residue chain is ATP synthase subunit beta (468 aa).

Position 155 to 162 (155 to 162) interacts with ATP; it reads GGAGVGKT.

Belongs to the ATPase alpha/beta chains family. F-type ATPases have 2 components, CF(1) - the catalytic core - and CF(0) - the membrane proton channel. CF(1) has five subunits: alpha(3), beta(3), gamma(1), delta(1), epsilon(1). CF(0) has three main subunits: a(1), b(2) and c(9-12). The alpha and beta chains form an alternating ring which encloses part of the gamma chain. CF(1) is attached to CF(0) by a central stalk formed by the gamma and epsilon chains, while a peripheral stalk is formed by the delta and b chains.

It localises to the cell membrane. It catalyses the reaction ATP + H2O + 4 H(+)(in) = ADP + phosphate + 5 H(+)(out). Functionally, produces ATP from ADP in the presence of a proton gradient across the membrane. The catalytic sites are hosted primarily by the beta subunits. The sequence is that of ATP synthase subunit beta from Streptococcus pyogenes serotype M3 (strain ATCC BAA-595 / MGAS315).